The chain runs to 285 residues: Putative sugar uptake protein lmo0424 (285 aa).

The next 9 membrane-spanning stretches (helical) occupy residues 2–21 (SIYL…PIIA), 31–50 (QLLG…FWIL), 55–77 (TVLS…LLQF), 111–133 (WQTV…GVVM), 146–168 (SVSF…YVVT), 172–194 (FDVT…AIGI), 207–229 (VTFN…LATA), 233–255 (VATS…ILIF), and 262–284 (LEWT…LSLL).

It belongs to the GRP transporter (TC 2.A.7.5) family.

It is found in the cell membrane. The chain is Putative sugar uptake protein lmo0424 from Listeria monocytogenes serovar 1/2a (strain ATCC BAA-679 / EGD-e).